The primary structure comprises 670 residues: Amyloid beta A4 precursor protein-binding family B member 1-interacting protein (670 aa).

Residue Ser-55 is modified to Phosphoserine. A Ras-associating domain is found at 179–266 (KKLVVKVHMD…KVLFLEKEER (88 aa)). The PH domain occupies 313-422 (VPELEGALYL…WVMGIRIAKY (110 aa)). Residues 449–653 (VGTPMPAQPS…PGAPGNSEQD (205 aa)) form a disordered region. A compositionally biased stretch (polar residues) spans 456 to 475 (QPSTVSSGLKTGTSQPNGQM). Phosphoserine is present on Ser-532. The residue at position 534 (Thr-534) is a Phosphothreonine. Ser-537 bears the Phosphoserine mark. Pro residues-rich tracts occupy residues 553–567 (PHPPENFLPPPPPPP), 576–599 (LPPPPPPPYLEEPPDFVPPPPPPA), 606–615 (LPPPPPPPPC), and 625–634 (PLPPKKPLVP).

The protein belongs to the MRL family. As to quaternary structure, interacts, through the N-terminal Pro-rich region, with the WW domain of APBB1. Interacts with RAP1A, PFN1, VASP and ENAH. Ubiquitously expressed with high expression in the hematopoietic system.

Its subcellular location is the cell membrane. The protein resides in the cell projection. It localises to the lamellipodium. It is found in the cell junction. The protein localises to the focal adhesion. Its subcellular location is the cytoplasm. The protein resides in the cytoskeleton. Its function is as follows. Appears to function in the signal transduction from Ras activation to actin cytoskeletal remodeling. Suppresses insulin-induced promoter activities through AP1 and SRE. Mediates Rap1-induced adhesion. This chain is Amyloid beta A4 precursor protein-binding family B member 1-interacting protein (Apbb1ip), found in Mus musculus (Mouse).